The following is an 80-amino-acid chain: Large ribosomal subunit protein bL31 (80 aa).

Positions 16, 18, 38, and 41 each coordinate Zn(2+).

Belongs to the bacterial ribosomal protein bL31 family. Type A subfamily. As to quaternary structure, part of the 50S ribosomal subunit. It depends on Zn(2+) as a cofactor.

Its function is as follows. Binds the 23S rRNA. The chain is Large ribosomal subunit protein bL31 from Mycobacterium bovis (strain ATCC BAA-935 / AF2122/97).